The following is a 397-amino-acid chain: Elongation factor Tu (397 aa).

The region spanning 10–206 is the tr-type G domain; that stretch reads KPHCNIGTIG…AVDEYIPQPE (197 aa). Positions 19 to 26 are G1; that stretch reads GHIDHGKT. Residue 19–26 participates in GTP binding; that stretch reads GHIDHGKT. Thr-26 serves as a coordination point for Mg(2+). Residues 62–66 form a G2 region; that stretch reads GITIS. The segment at 83–86 is G3; that stretch reads DCPG. Residues 83 to 87 and 138 to 141 each bind GTP; these read DCPGH and NKCD. A G4 region spans residues 138–141; it reads NKCD. The segment at 176–178 is G5; the sequence is SAF.

Belongs to the TRAFAC class translation factor GTPase superfamily. Classic translation factor GTPase family. EF-Tu/EF-1A subfamily. Monomer.

It localises to the cytoplasm. It catalyses the reaction GTP + H2O = GDP + phosphate + H(+). In terms of biological role, GTP hydrolase that promotes the GTP-dependent binding of aminoacyl-tRNA to the A-site of ribosomes during protein biosynthesis. This chain is Elongation factor Tu, found in Cutibacterium acnes (strain DSM 16379 / KPA171202) (Propionibacterium acnes).